The following is a 464-amino-acid chain: Opioid growth factor receptor-like protein 1 (464 aa).

Disordered regions lie at residues 1–91 and 309–464; these read MGNL…AKPK and ENFI…TSSG. The span at 43–59 shows a compositional bias: basic and acidic residues; it reads QQHDEPEQPKQPPERAG. The span at 74-86 shows a compositional bias: low complexity; that stretch reads AAGAEQGGESTEG. Residues 316-325 show a composition bias toward basic and acidic residues; sequence PKKELPERSK. A compositionally biased stretch (polar residues) spans 327-342; sequence QKTPTLPASGSNGQTS. Composition is skewed to basic and acidic residues over residues 363-382, 390-400, and 425-439; these read SVEE…DKPS, PKPRNTEKDSA, and SEKD…KDSE. Over residues 452–464 the composition is skewed to polar residues; sequence AQQNATNPQTSSG.

It belongs to the opioid growth factor receptor family.

In Mus musculus (Mouse), this protein is Opioid growth factor receptor-like protein 1 (Ogfrl1).